A 706-amino-acid chain; its full sequence is Protein argonaute (706 aa).

The interval Met-1 to Thr-108 is N-terminal domain. Residues Lys-109 to Pro-165 are linker L1. Residues Thr-168–Leu-259 form the PAZ domain. Residues Asn-263–Thr-334 form a linker L2 region. The mid domain stretch occupies residues Asn-335–Lys-448. Residues Leu-419–Glu-694 form the Piwi domain. Residues Lys-449–Leu-706 form a PIWI domain region. Catalysis depends on residues Asp-502, Glu-541, and Asp-571. Asp-502 provides a ligand contact to Mn(2+). Mn(2+) is bound at residue Asp-571. The interval Phe-612–Leu-650 is PIWI box. The active site involves Asp-683. Mn(2+) is bound at residue Asp-683.

It belongs to the argonaute family. Long pAgo subfamily. Mg(2+) serves as cofactor.

Its function is as follows. A DNA-guided RNA endonuclease. Uses short ssDNA sequences as guides (gDNA) to bind complementary target strands, resulting in cleavage of the target RNA. The cleavage site is 10 nucleotides downstream of the residue base paired with the 5'-end of the gDNA. Binds ssDNA better than ssRNA, binds dsDNA and DNA-RNA hybrids but does not bind dsRNA. A 2 nucleotide 3'-overhang (possibly on the guide strand) may help load nucleic acids into the complex. The polypeptide is Protein argonaute (Aquifex aeolicus (strain VF5)).